We begin with the raw amino-acid sequence, 311 residues long: tRNA pseudouridine synthase B (311 aa).

Residue Asp49 is the Nucleophile of the active site.

This sequence belongs to the pseudouridine synthase TruB family. Type 1 subfamily.

It carries out the reaction uridine(55) in tRNA = pseudouridine(55) in tRNA. Functionally, responsible for synthesis of pseudouridine from uracil-55 in the psi GC loop of transfer RNAs. In Actinobacillus succinogenes (strain ATCC 55618 / DSM 22257 / CCUG 43843 / 130Z), this protein is tRNA pseudouridine synthase B.